We begin with the raw amino-acid sequence, 189 residues long: Large ribosomal subunit protein bL9 (189 aa).

It belongs to the bacterial ribosomal protein bL9 family.

Functionally, binds to the 23S rRNA. The chain is Large ribosomal subunit protein bL9 from Beijerinckia indica subsp. indica (strain ATCC 9039 / DSM 1715 / NCIMB 8712).